The primary structure comprises 246 residues: UDP-N-acetyl-D-mannosaminuronic acid transferase (246 aa).

This sequence belongs to the glycosyltransferase 26 family.

It catalyses the reaction UDP-N-acetyl-alpha-D-mannosaminouronate + N-acetyl-alpha-D-glucosaminyl-di-trans,octa-cis-undecaprenyl diphosphate = beta-D-ManNAcA-(1-&gt;4)-alpha-D-GlcNAc-di-trans,octa-cis-undecaprenyl diphosphate + UDP + H(+). It participates in bacterial outer membrane biogenesis; enterobacterial common antigen biosynthesis. Functionally, catalyzes the synthesis of Und-PP-GlcNAc-ManNAcA (Lipid II), the second lipid-linked intermediate involved in enterobacterial common antigen (ECA) synthesis. The chain is UDP-N-acetyl-D-mannosaminuronic acid transferase from Salmonella paratyphi A (strain ATCC 9150 / SARB42).